A 117-amino-acid polypeptide reads, in one-letter code: Large ribosomal subunit protein bL20 (117 aa).

It belongs to the bacterial ribosomal protein bL20 family.

Its function is as follows. Binds directly to 23S ribosomal RNA and is necessary for the in vitro assembly process of the 50S ribosomal subunit. It is not involved in the protein synthesizing functions of that subunit. The sequence is that of Large ribosomal subunit protein bL20 from Pelotomaculum thermopropionicum (strain DSM 13744 / JCM 10971 / SI).